The chain runs to 318 residues: Replication factor C small subunit (318 aa).

Position 43 to 50 (43 to 50 (GSVGTGKT)) interacts with ATP.

The protein belongs to the activator 1 small subunits family. RfcS subfamily. In terms of assembly, heteromultimer composed of small subunits (RfcS) and large subunits (RfcL).

Functionally, part of the RFC clamp loader complex which loads the PCNA sliding clamp onto DNA. This is Replication factor C small subunit from Thermoplasma acidophilum (strain ATCC 25905 / DSM 1728 / JCM 9062 / NBRC 15155 / AMRC-C165).